A 200-amino-acid polypeptide reads, in one-letter code: NADH-ubiquinone oxidoreductase 21.3 kDa subunit (200 aa).

The next 3 helical transmembrane spans lie at 16–36 (IKSGVSGALFSGGAGLLMASL), 48–68 (MHVFTHGGGTIISFTLAGGIY), and 105–125 (FPVILGFGAMAGSVVGAFAFS).

In terms of assembly, complex I is composed of about 40 different subunits.

It localises to the mitochondrion inner membrane. The enzyme catalyses a ubiquinone + NADH + 5 H(+)(in) = a ubiquinol + NAD(+) + 4 H(+)(out). In terms of biological role, transfer of electrons from NADH to the respiratory chain. The immediate electron acceptor for the enzyme is believed to be ubiquinone. The chain is NADH-ubiquinone oxidoreductase 21.3 kDa subunit from Neurospora crassa (strain ATCC 24698 / 74-OR23-1A / CBS 708.71 / DSM 1257 / FGSC 987).